A 237-amino-acid polypeptide reads, in one-letter code: Aliphatic sulfonates import ATP-binding protein SsuB 1 (237 aa).

In terms of domain architecture, ABC transporter spans 5 to 221; the sequence is LMNIRVDRKA…PRDRRDPLLA (217 aa). 38-45 contacts ATP; sequence GPSGCGKS.

The protein belongs to the ABC transporter superfamily. Aliphatic sulfonates importer (TC 3.A.1.17.2) family. The complex is composed of two ATP-binding proteins (SsuB), two transmembrane proteins (SsuC) and a solute-binding protein (SsuA).

The protein localises to the cell inner membrane. The catalysed reaction is ATP + H2O + aliphatic sulfonate-[sulfonate-binding protein]Side 1 = ADP + phosphate + aliphatic sulfonateSide 2 + [sulfonate-binding protein]Side 1.. Functionally, part of the ABC transporter complex SsuABC involved in aliphatic sulfonates import. Responsible for energy coupling to the transport system. The protein is Aliphatic sulfonates import ATP-binding protein SsuB 1 of Pseudomonas savastanoi pv. phaseolicola (strain 1448A / Race 6) (Pseudomonas syringae pv. phaseolicola (strain 1448A / Race 6)).